A 446-amino-acid polypeptide reads, in one-letter code: NADH-dependent phenylglyoxylate dehydrogenase subunit beta (446 aa).

4 consecutive 4Fe-4S ferredoxin-type domains span residues 6 to 35 (STIAFDPAKCDGCGDCMTACAQAKTGTDDI), 49 to 80 (ADKTFELALCRQCADPKCVTVCPAGALNKDGT), 82 to 111 (GVIGWDATKCVDCLLCTVGCAYAGIALDEA), and 109 to 141 (DEATGHVAKCDTCDGNPACVPACPHGALKHITT).

In terms of assembly, dimer of heteropentamers composed of an alpha (PadG), a beta (PadI), a gamma (PadE), a delta (PadF) and an epsilon (PadH) subunit. [4Fe-4S] cluster serves as cofactor.

It carries out the reaction phenylglyoxylate + NAD(+) + CoA = benzoyl-CoA + CO2 + NADH. Activated by magnesium ions and thiamine diphosphate. Functionally, involved in the anaerobic metabolism of phenylalanine and phenylacetate. Catalyzes the oxidative decarboxylation of phenylglyoxylate to benzoyl-CoA and CO(2). It can also react slowly with 2-oxo-3-methylbutanoate and use different electron acceptors such as benzyl viologen, methyl viologen, FAD or FMN, but NAD seems to be the physiological electron acceptor. Also catalyzes an isotope exchange between CO(2) and the carboxyl group which proves partial or complete reversibility of the oxidative decarboxylation reaction. This chain is NADH-dependent phenylglyoxylate dehydrogenase subunit beta (padI), found in Aromatoleum evansii (Azoarcus evansii).